Reading from the N-terminus, the 72-residue chain is Translation initiation factor IF-1 (72 aa).

The S1-like domain occupies 1 to 72 (MSKEDSIEVT…TKGRITFRHR (72 aa)).

Belongs to the IF-1 family. In terms of assembly, component of the 30S ribosomal translation pre-initiation complex which assembles on the 30S ribosome in the order IF-2 and IF-3, IF-1 and N-formylmethionyl-tRNA(fMet); mRNA recruitment can occur at any time during PIC assembly.

The protein resides in the cytoplasm. In terms of biological role, one of the essential components for the initiation of protein synthesis. Stabilizes the binding of IF-2 and IF-3 on the 30S subunit to which N-formylmethionyl-tRNA(fMet) subsequently binds. Helps modulate mRNA selection, yielding the 30S pre-initiation complex (PIC). Upon addition of the 50S ribosomal subunit IF-1, IF-2 and IF-3 are released leaving the mature 70S translation initiation complex. The chain is Translation initiation factor IF-1 from Solibacter usitatus (strain Ellin6076).